The primary structure comprises 308 residues: Acetaldehyde dehydrogenase (308 aa).

Position 25-28 (25-28 (TGAI)) interacts with NAD(+). Cysteine 139 (acyl-thioester intermediate) is an active-site residue. NAD(+) is bound at residue asparagine 279.

The protein belongs to the acetaldehyde dehydrogenase family.

The enzyme catalyses acetaldehyde + NAD(+) + CoA = acetyl-CoA + NADH + H(+). This chain is Acetaldehyde dehydrogenase, found in Streptomyces griseus subsp. griseus (strain JCM 4626 / CBS 651.72 / NBRC 13350 / KCC S-0626 / ISP 5235).